A 343-amino-acid chain; its full sequence is Glyceraldehyde-3-phosphate dehydrogenase (343 aa).

Residues 13–14 (TI) and Gly-111 each bind NAD(+). 140–142 (SCN) is a D-glyceraldehyde 3-phosphate binding site. The active-site Nucleophile is the Cys-141. An NAD(+)-binding site is contributed by Arg-169. 195-196 (HA) contributes to the D-glyceraldehyde 3-phosphate binding site. Gln-302 serves as a coordination point for NAD(+).

It belongs to the glyceraldehyde-3-phosphate dehydrogenase family. Homotetramer.

The protein localises to the cytoplasm. It catalyses the reaction D-glyceraldehyde 3-phosphate + phosphate + NADP(+) = (2R)-3-phospho-glyceroyl phosphate + NADPH + H(+). It carries out the reaction D-glyceraldehyde 3-phosphate + phosphate + NAD(+) = (2R)-3-phospho-glyceroyl phosphate + NADH + H(+). It functions in the pathway carbohydrate degradation; glycolysis; pyruvate from D-glyceraldehyde 3-phosphate: step 1/5. This is Glyceraldehyde-3-phosphate dehydrogenase from Hyperthermus butylicus (strain DSM 5456 / JCM 9403 / PLM1-5).